A 710-amino-acid polypeptide reads, in one-letter code: Prolyl endopeptidase (710 aa).

Met1 is subject to N-acetylmethionine. The residue at position 157 (Lys157) is an N6-acetyllysine. Catalysis depends on charge relay system residues Ser554, Asp641, and His680.

The protein belongs to the peptidase S9A family.

It is found in the cytoplasm. The catalysed reaction is Hydrolysis of Pro-|-Xaa &gt;&gt; Ala-|-Xaa in oligopeptides.. Functionally, cleaves peptide bonds on the C-terminal side of prolyl residues within peptides that are up to approximately 30 amino acids long. This Mus musculus (Mouse) protein is Prolyl endopeptidase (Prep).